The sequence spans 751 residues: Photosystem I P700 chlorophyll a apoprotein A1 (751 aa).

The next 8 membrane-spanning stretches (helical) occupy residues 72–95, 158–181, 197–221, 293–311, 348–371, 387–413, 435–457, and 532–550; these read IFSAHFGHLAVVFVWLSGMYFHGA, LYCTAIGGLVMAALMLFAGWFHYH, MNHHLAGLLGLGSLGWAGHQIHVSM, TAHHHLAIAVLFIIAGHMY, WHAQLAINLALLGSLTIIVAQHMY, LSLFTHHMWIGGFLIVGAGAHGAIFMV, AIISHLNWVCIFLGFHSFGLYIH, and FMVHHIHAFTIHVTALILL. [4Fe-4S] cluster is bound by residues cysteine 574 and cysteine 583. The next 2 membrane-spanning stretches (helical) occupy residues 590–611 and 665–687; these read HVFLGLFWMYNSLSIVIFHFSW and LSAYGIMFLAGHFVFAFSLMFLF. A chlorophyll a'-binding site is contributed by histidine 676. Methionine 684 and tyrosine 692 together coordinate chlorophyll a. Phylloquinone is bound at residue tryptophan 693. Residues 725–745 form a helical membrane-spanning segment; it reads AVGVAHYLLGGIVTTWAFFLA.

This sequence belongs to the PsaA/PsaB family. In terms of assembly, the PsaA/B heterodimer binds the P700 chlorophyll special pair and subsequent electron acceptors. PSI consists of a core antenna complex that captures photons, and an electron transfer chain that converts photonic excitation into a charge separation. The cyanobacterial PSI reaction center is composed of one copy each of PsaA,B,C,D,E,F,I,J,K,L,M and X, and forms trimeric complexes. PSI electron transfer chain: 5 chlorophyll a, 1 chlorophyll a', 2 phylloquinones and 3 4Fe-4S clusters. PSI core antenna: 90 chlorophyll a, 22 carotenoids, 3 phospholipids and 1 galactolipid. P700 is a chlorophyll a/chlorophyll a' dimer, A0 is one or more chlorophyll a, A1 is one or both phylloquinones and FX is a shared 4Fe-4S iron-sulfur center. is required as a cofactor.

Its subcellular location is the cellular thylakoid membrane. The enzyme catalyses reduced [plastocyanin] + hnu + oxidized [2Fe-2S]-[ferredoxin] = oxidized [plastocyanin] + reduced [2Fe-2S]-[ferredoxin]. PsaA and PsaB bind P700, the primary electron donor of photosystem I (PSI), as well as the electron acceptors A0, A1 and FX. PSI is a plastocyanin/cytochrome c6-ferredoxin oxidoreductase, converting photonic excitation into a charge separation, which transfers an electron from the donor P700 chlorophyll pair to the spectroscopically characterized acceptors A0, A1, FX, FA and FB in turn. Oxidized P700 is reduced on the lumenal side of the thylakoid membrane by plastocyanin or cytochrome c6. The sequence is that of Photosystem I P700 chlorophyll a apoprotein A1 from Synechocystis sp. (strain ATCC 27184 / PCC 6803 / Kazusa).